A 1442-amino-acid polypeptide reads, in one-letter code: Protein patched homolog 1 (1442 aa).

The interval 1-45 (MASAADALEPESGSSTAGGGSHPVRAARSARGRRRRSGGTRRAAA) is disordered. Topologically, residues 1–101 (MASAADALEP…GCYIQKNCGK (101 aa)) are cytoplasmic. Residues 28–39 (RSARGRRRRSGG) show a composition bias toward basic residues. The helical transmembrane segment at 102-122 (FLVVGLLYSAFAVGLRAANLE) threads the bilayer. Over 123 to 436 (TNVEELWVEV…LDDILKSFSD (314 aa)) the chain is Extracellular. 4 N-linked (GlcNAc...) asparagine glycosylation sites follow: Asn141, Asn312, Asn349, and Asn414. A helical membrane pass occupies residues 437-457 (VSVIRVASGYLLMLAYACLTM). An SSD domain is found at 438 to 598 (SVIRVASGYL…LLIFPAILSM (161 aa)). Residues 458 to 472 (LRWDCAKSQGAVGLA) are Cytoplasmic-facing. A helical transmembrane segment spans residues 473–493 (GVLLVALSVAAGLGLCSLIGI). Residues 494-501 (SFNAATTQ) are Extracellular-facing. A helical membrane pass occupies residues 502–522 (VLPFLALGVGVDDVFLLAHAF). Over 523–547 (SETGQNKRIPFEDRTGECLKRTGAS) the chain is Cytoplasmic. A helical membrane pass occupies residues 548–568 (VALTSISNVTAFFMAALIPIP). Over 569 to 577 (ALRAFSLQA) the chain is Extracellular. The chain crosses the membrane as a helical span at residues 578-598 (AVVVVFNFAMVLLIFPAILSM). Over 599-747 (DLYRREDRRL…HYAPFLLKPK (149 aa)) the chain is Cytoplasmic. The chain crosses the membrane as a helical span at residues 748-768 (AKVVVIFLFLGLLGLSLYGTT). The Extracellular segment spans residues 769–1026 (RVRDGLDLTD…WEQYIGLRHW (258 aa)). N-linked (GlcNAc...) asparagine glycans are attached at residues Asn827, Asn874, and Asn999. The helical transmembrane segment at 1027 to 1047 (LLLSISVVLACTFLVCALFLL) threads the bilayer. Topologically, residues 1048–1053 (NPWTAG) are cytoplasmic. A helical membrane pass occupies residues 1054 to 1074 (IIVVVLALMTVELFGMMGLIG). Topologically, residues 1075–1082 (IKLSAVPV) are extracellular. The chain crosses the membrane as a helical span at residues 1083 to 1101 (VILIASVGIGVEFTVHIAL). The Cytoplasmic portion of the chain corresponds to 1102-1120 (AFLTAIGDKNRRAVLALEH). Residues 1121 to 1141 (MFAPVLDGAVSTLLGVLMLAG) traverse the membrane as a helical segment. The Extracellular segment spans residues 1142-1153 (SEFDFIVRYFFA). A helical transmembrane segment spans residues 1154–1174 (VLAILTILGVLNGLVLLPVLL). Residues 1175–1442 (SFFGPYPEVS…EERTAGKISE (268 aa)) lie on the Cytoplasmic side of the membrane. Disordered regions lie at residues 1188-1231 (GRNR…TTVS) and 1266-1338 (STVV…LNHK). A compositionally biased stretch (low complexity) spans 1217-1226 (SDSSDSEYSS). Over residues 1276-1293 (QSSPRLQSNPEAGTQQVW) the composition is skewed to polar residues.

It belongs to the patched family. In terms of processing, glycosylation is necessary for SHH binding. Expression is seen in the embryonic neural tube, sclerotome, visceral mesoderm, and limb bud.

The protein localises to the membrane. Its function is as follows. Acts as a receptor for sonic hedgehog (SHH), indian hedgehog (IHH) and desert hedgehog (DHH). Associates with the smoothened protein (SMO) to transduce the hedgehog's proteins signal. The chain is Protein patched homolog 1 (PTCH1) from Gallus gallus (Chicken).